A 143-amino-acid polypeptide reads, in one-letter code: Putative complexin-1 (143 aa).

Residues 16–72 (EVTGGLGMKDDGGEKTETGEDPEVIAARLEQEERRKEKHRKMENEREKMRQGIRDKY) are disordered. 2 stretches are compositionally biased toward basic and acidic residues: residues 23 to 33 (MKDDGGEKTET) and 44 to 72 (LEQE…RDKY). A coiled-coil region spans residues 40-71 (IAARLEQEERRKEKHRKMENEREKMRQGIRDK).

Belongs to the complexin/synaphin family.

Its subcellular location is the cytoplasm. The protein localises to the cytosol. Functionally, positively regulates a late step in synaptic vesicle exocytosis. The polypeptide is Putative complexin-1 (cpx-1) (Caenorhabditis elegans).